The following is a 445-amino-acid chain: MSNRKYFGTDGIRGRVGDAPITPDFVLKLGWAAGKVLARHGSRKIIIGKDTRISGYMLESALEAGLAAAGLSALFTGPMPTPAVAYLTRTFRAEAGIVISASHNPFYDNGIKFFSIDGTKLPDAVEEAIEAEMEKEISCVDSAELGKASRIVDAAGRYIEFCKATFPNELSLSELKIVVDCANGATYHIAPNVLRELGANVIAIGCEPNGVNINAEVGATDVRALQARVLAEKADLGIAFDGDGDRVIMVDHEGNKVDGDQIMYIIAREGLRQGQLRGGAVGTLMSNMGLELALKQLGIPFARAKVGDRYVLEKMQEKGWRIGAENSGHVILLDKTTTGDGIVAGLQVLAAMARNHMSLHDLCSGMKMFPQILVNVRYTAGSGDPLEHESVKAVTAEVETALGSRGRVLLRKSGTEPLIRVMVEGEDEAQVTEFAHRIADAVKAV.

Catalysis depends on serine 102, which acts as the Phosphoserine intermediate. Positions 102, 241, 243, and 245 each coordinate Mg(2+). The residue at position 102 (serine 102) is a Phosphoserine.

The protein belongs to the phosphohexose mutase family. Mg(2+) serves as cofactor. Activated by phosphorylation.

The catalysed reaction is alpha-D-glucosamine 1-phosphate = D-glucosamine 6-phosphate. Catalyzes the conversion of glucosamine-6-phosphate to glucosamine-1-phosphate. The protein is Phosphoglucosamine mutase of Escherichia coli O157:H7.